The sequence spans 491 residues: Limb region 1 homolog-like protein (491 aa).

Topologically, residues 1 to 20 (METEDVTVREQIFHDRVRET) are extracellular. The chain crosses the membrane as a helical span at residues 21–41 (IICVLLFICLYILSHFILTHF). Residues 42-59 (KKSAEFVTDDIEDATVNK) are Cytoplasmic-facing. The chain crosses the membrane as a helical span at residues 60–80 (IALWLCTFTLSVAVCAVLLLP). The Extracellular segment spans residues 81–111 (ISILSNEVLLTFPHSYYMQWLNGSLIRGLWN). A helical membrane pass occupies residues 112 to 132 (LVFLFSNLSLVFLMPFAYFFT). Residues 133 to 152 (ESEGFAGSKKGVMARVYETA) are Cytoplasmic-facing. A helical transmembrane segment spans residues 153–173 (VMLLLLSLLVLGIVWVASALL). Topologically, residues 174–192 (HHNTARESLYDLWEYYLPY) are extracellular. The chain crosses the membrane as a helical span at residues 193–213 (LYSGISLFGVLLLLLCTPFGL). The Cytoplasmic portion of the chain corresponds to 214-292 (SRMFSVTGSL…RKRASPWQRN (79 aa)). The chain crosses the membrane as a helical span at residues 293–313 (LVYPVAMLLLLALTAVSVLMV). At 314–346 (CFHVLELLFDESAMPRGMEDPHLGLASFSMLGS) the chain is on the extracellular side. Residues 347 to 367 (LGAAVQVVIILYLMVSSVVGF) form a helical membrane-spanning segment. Over 368–384 (YSSPLFTGLLPRAQDTT) the chain is Cytoplasmic. Residues 385 to 405 (LTQIIGNCVSLLILSSALPVF) traverse the membrane as a helical segment. Over 406–427 (SRTLGITKFDLLGDFGRHDWLG) the chain is Extracellular. Residues 428–448 (SFHIVFLYNMLFAGLTSACLI) traverse the membrane as a helical segment. The Cytoplasmic segment spans residues 449-491 (NTVTWALQRELIRAFGLHRLPLTVSRSTIPLKLLLANGLSKIH).

This sequence belongs to the LIMR family. In terms of assembly, dimer. Can also form higher oligomers.

The protein resides in the cell membrane. It localises to the endoplasmic reticulum membrane. May play a role in lymphocyte development by negatively regulating the canonical Wnt signaling pathway. May act as a LCN1 receptor. In Danio rerio (Zebrafish), this protein is Limb region 1 homolog-like protein (lmbr1l).